The primary structure comprises 524 residues: Cytochrome P450 4F1 (524 aa).

Residues valine 15–leucine 35 traverse the membrane as a helical segment. 2 residues coordinate heme: glutamate 328 and cysteine 468.

This sequence belongs to the cytochrome P450 family. It depends on heme as a cofactor. In terms of tissue distribution, expressed in liver.

It localises to the endoplasmic reticulum membrane. It is found in the microsome membrane. The enzyme catalyses (5Z,8Z,11Z,14Z)-eicosatetraenoate + reduced [NADPH--hemoprotein reductase] + O2 = 20-hydroxy-(5Z,8Z,11Z,14Z)-eicosatetraenoate + oxidized [NADPH--hemoprotein reductase] + H2O + H(+). The catalysed reaction is 5-hydroxy-(6E,8Z,11Z,14Z)-eicosatetraenoate + reduced [NADPH--hemoprotein reductase] + O2 = 5,20-dihydroxy-(6E,8Z,11Z,14Z)-eicosatetraenoate + oxidized [NADPH--hemoprotein reductase] + H2O + H(+). It catalyses the reaction 8-hydroxy-(5Z,9E,11Z,14Z)-eicosatetraenoate + reduced [NADPH--hemoprotein reductase] + O2 = 8,20-dihydroxy-(5Z,9E,11Z,14Z)-eicosatetraenoate + oxidized [NADPH--hemoprotein reductase] + H2O + H(+). It carries out the reaction leukotriene B4 + reduced [NADPH--hemoprotein reductase] + O2 = 20-hydroxy-leukotriene B4 + oxidized [NADPH--hemoprotein reductase] + H2O + H(+). The enzyme catalyses 6-trans-leukotriene B4 + reduced [NADPH--hemoprotein reductase] + O2 = 20-hydroxy-6-trans-leukotriene B4 + oxidized [NADPH--hemoprotein reductase] + H2O + H(+). The catalysed reaction is lipoxin A4 + reduced [NADPH--hemoprotein reductase] + O2 = 20-hydroxy-lipoxin A4 + oxidized [NADPH--hemoprotein reductase] + H2O + H(+). A cytochrome P450 monooxygenase involved in the metabolism of arachidonic acid and its oxygenated derivatives. Mechanistically, uses molecular oxygen inserting one oxygen atom into a substrate, and reducing the second into a water molecule, with two electrons provided by NADPH via cytochrome P450 reductase (CPR; NADPH-ferrihemoprotein reductase). Participates in the conversion of arachidonic acid to omega-hydroxyeicosatetraenoic acid (20-HETE), a signaling molecule acting both as vasoconstrictive and natriuretic with overall effect on arterial blood pressure. May play a role in the oxidative inactivation of eicosanoids, including both pro-inflammatory and anti-inflammatory mediators such as leukotriene B4 (LTB4), lipoxin A4 (LXA4), and several HETEs. The chain is Cytochrome P450 4F1 from Rattus norvegicus (Rat).